The sequence spans 397 residues: Phosphoglycerate kinase (397 aa).

Substrate contacts are provided by residues D21–N23, R36, H59–R62, R118, and R151. ATP contacts are provided by residues K201, E323, and G353–T356.

It belongs to the phosphoglycerate kinase family. In terms of assembly, monomer.

It is found in the cytoplasm. It catalyses the reaction (2R)-3-phosphoglycerate + ATP = (2R)-3-phospho-glyceroyl phosphate + ADP. It participates in carbohydrate degradation; glycolysis; pyruvate from D-glyceraldehyde 3-phosphate: step 2/5. The protein is Phosphoglycerate kinase of Bartonella tribocorum (strain CIP 105476 / IBS 506).